The chain runs to 500 residues: L-arabinose isomerase (500 aa).

E306, E333, H349, and H448 together coordinate Mn(2+).

This sequence belongs to the arabinose isomerase family. The cofactor is Mn(2+).

The enzyme catalyses beta-L-arabinopyranose = L-ribulose. Its pathway is carbohydrate degradation; L-arabinose degradation via L-ribulose; D-xylulose 5-phosphate from L-arabinose (bacterial route): step 1/3. Its function is as follows. Catalyzes the conversion of L-arabinose to L-ribulose. The protein is L-arabinose isomerase of Saccharophagus degradans (strain 2-40 / ATCC 43961 / DSM 17024).